The sequence spans 396 residues: Elongation factor Tu (396 aa).

The region spanning 10 to 206 (KPHVNVGTIG…ALDTYIPTPE (197 aa)) is the tr-type G domain. Residues 19–26 (GHVDHGKT) form a G1 region. A GTP-binding site is contributed by 19–26 (GHVDHGKT). Thr-26 serves as a coordination point for Mg(2+). The tract at residues 60-64 (GITIN) is G2. The tract at residues 81 to 84 (DCPG) is G3. Residues 81–85 (DCPGH) and 136–139 (NKCD) each bind GTP. Positions 136–139 (NKCD) are G4. Residues 174 to 176 (SAK) are G5.

This sequence belongs to the TRAFAC class translation factor GTPase superfamily. Classic translation factor GTPase family. EF-Tu/EF-1A subfamily. As to quaternary structure, monomer.

Its subcellular location is the cytoplasm. The enzyme catalyses GTP + H2O = GDP + phosphate + H(+). Its function is as follows. GTP hydrolase that promotes the GTP-dependent binding of aminoacyl-tRNA to the A-site of ribosomes during protein biosynthesis. The sequence is that of Elongation factor Tu from Cupriavidus pinatubonensis (strain JMP 134 / LMG 1197) (Cupriavidus necator (strain JMP 134)).